Here is a 352-residue protein sequence, read N- to C-terminus: S-adenosylmethionine:tRNA ribosyltransferase-isomerase (352 aa).

It belongs to the QueA family. As to quaternary structure, monomer.

The protein localises to the cytoplasm. The catalysed reaction is 7-aminomethyl-7-carbaguanosine(34) in tRNA + S-adenosyl-L-methionine = epoxyqueuosine(34) in tRNA + adenine + L-methionine + 2 H(+). Its pathway is tRNA modification; tRNA-queuosine biosynthesis. Transfers and isomerizes the ribose moiety from AdoMet to the 7-aminomethyl group of 7-deazaguanine (preQ1-tRNA) to give epoxyqueuosine (oQ-tRNA). This Paraburkholderia xenovorans (strain LB400) protein is S-adenosylmethionine:tRNA ribosyltransferase-isomerase.